Consider the following 563-residue polypeptide: Eukaryotic translation initiation factor 3 subunit D-1 (563 aa).

Residues 98–167 (VQKPPHQRGR…GPPPKMRESS (70 aa)) are disordered. A compositionally biased stretch (basic residues) spans 100–121 (KPPHQRGRFRNMRNSRSGRGRN). At threonine 128 the chain carries Phosphothreonine. The RNA gate stretch occupies residues 291–305 (EFDLLTVNETSVEPP).

Belongs to the eIF-3 subunit D family. As to quaternary structure, component of the eukaryotic translation initiation factor 3 (eIF-3) complex. The eIF-3 complex interacts with pix.

It is found in the cytoplasm. In terms of biological role, mRNA cap-binding component of the eukaryotic translation initiation factor 3 (eIF-3) complex, which is involved in protein synthesis of a specialized repertoire of mRNAs and, together with other initiation factors, stimulates binding of mRNA and methionyl-tRNAi to the 40S ribosome. The eIF-3 complex specifically targets and initiates translation of a subset of mRNAs involved in cell proliferation. In the eIF-3 complex, eif3d specifically recognizes and binds the 7-methylguanosine cap of a subset of mRNAs. The protein is Eukaryotic translation initiation factor 3 subunit D-1 of Drosophila mojavensis (Fruit fly).